Consider the following 493-residue polypeptide: Dipeptide permease D (493 aa).

Over 1-13 (MNKHASQPRAIYY) the chain is Cytoplasmic. A helical membrane pass occupies residues 14-34 (VVALQIWEYFSFYGMRALLIL). Residues 35 to 48 (YLTNQLKYNDTHAY) lie on the Periplasmic side of the membrane. Residues 49–69 (ELFSAYCSLVYVTPILGGFLA) form a helical membrane-spanning segment. Residues 70–77 (DKVLGNRM) lie on the Cytoplasmic side of the membrane. Residues 78-98 (AVMLGALLMAIGHVVLGASEI) traverse the membrane as a helical segment. At 99-100 (HP) the chain is on the periplasmic side. A helical transmembrane segment spans residues 101-121 (SFLYLSLAIIVCGYGLFKSNV). Over 122–137 (SCLLGELYEPTDPRRD) the chain is Cytoplasmic. A helical transmembrane segment spans residues 138–158 (GGFSLMYAAGNVGSIIAPIAC). Residues 159–166 (GYAQEEYS) lie on the Periplasmic side of the membrane. A helical transmembrane segment spans residues 167–187 (WAMGFGLAAVGMIAGLVIFLC). Topologically, residues 188 to 211 (GNRHFTHTRGVNKKVLRATNFLLP) are cytoplasmic. Residues 212–232 (NWGWLLVLLVATPALITILFW) traverse the membrane as a helical segment. Residues 233 to 234 (KE) lie on the Periplasmic side of the membrane. The chain crosses the membrane as a helical span at residues 235-255 (WSVYALIVATIIGLGVLAKIY). Residues 256-266 (RKAENQKQRKE) lie on the Cytoplasmic side of the membrane. Residues 267 to 287 (LGLIVTLTFFSMLFWAFAQQG) form a helical membrane-spanning segment. Residues 288-311 (GSSISLYIDRFVNRDMFGYTVPTA) lie on the Periplasmic side of the membrane. A helical transmembrane segment spans residues 312 to 332 (MFQSINAFAVMLCGVFLAWVV). Residues 333–343 (KESVAGNRTVR) lie on the Cytoplasmic side of the membrane. The chain crosses the membrane as a helical span at residues 344-364 (IWGKFALGLGLMSAGFCILTL). The Periplasmic portion of the chain corresponds to 365–378 (SARWSAMYGHSSLP). The helical transmembrane segment at 379–399 (LMVLGLAVMGFAELFIDPVAM) threads the bilayer. Residues 400–412 (SQITRIEIPGVTG) lie on the Cytoplasmic side of the membrane. Residues 413 to 433 (VLTGIYMLLSGAIANYLAGVI) traverse the membrane as a helical segment. At 434–461 (ADQTSQASFDASGAINYSINAYIEVFDQ) the chain is on the periplasmic side. Residues 462-482 (ITWGALACVGLVLMIWLYQAL) form a helical membrane-spanning segment. The Cytoplasmic portion of the chain corresponds to 483-493 (KFRNRALALES).

The protein belongs to the major facilitator superfamily. Proton-dependent oligopeptide transporter (POT/PTR) (TC 2.A.17) family. DtpD subfamily.

It localises to the cell inner membrane. Its function is as follows. Probable proton-dependent permease that transports dipeptides. The protein is Dipeptide permease D (dtpD) of Escherichia coli (strain K12).